The following is a 68-amino-acid chain: Phycobilisome 7.8 kDa linker polypeptide, allophycocyanin-associated, core (68 aa).

Residues 2–57 (SRLFKITALVPSLSRTRTQRELQNTYFTKLVPYENWFREQQRIQKAGGKIIKVELA) form the CpcD-like domain.

It belongs to the phycobilisome linker protein family.

The protein localises to the cellular thylakoid membrane. Rod linker protein, associated with allophycocyanin. Linker polypeptides determine the state of aggregation and the location of the disk-shaped phycobiliprotein units within the phycobilisome and modulate their spectroscopic properties in order to mediate a directed and optimal energy transfer. This Nostoc sp. (strain PCC 7120 / SAG 25.82 / UTEX 2576) protein is Phycobilisome 7.8 kDa linker polypeptide, allophycocyanin-associated, core (apcC).